The chain runs to 92 residues: Small integral membrane protein 12 (92 aa).

Residues 15-34 (YVTFPVAFVVGAVGYHLEWF) form a helical membrane-spanning segment.

This sequence belongs to the SMIM12 family.

The protein localises to the membrane. The polypeptide is Small integral membrane protein 12 (SMIM12) (Nomascus leucogenys (Northern white-cheeked gibbon)).